The chain runs to 212 residues: MGTEFNGLFDEWAHTYDSFVQGEDIQYKEVFAHYEEILEDVVNKSFGNVLEFGVGTGNLTNKLLLAGRTVYGIEPSREMRAIAKEKLPEGFTITEGDFLKFDVPNTIDTIVSTYAFHHLTDEEKDRAIAKYSQLLNKGGKIVFADTIFVDQEAYDKTVETAKQRGFHQLANDLQTEYYTRIPIMQSIFEKNGFHVTFTRLNHFVWVMEATKQ.

S-adenosyl-L-methionine contacts are provided by glycine 53, glutamate 74, and aspartate 97.

It belongs to the methyltransferase superfamily. YrrT family.

In terms of biological role, could be a S-adenosyl-L-methionine-dependent methyltransferase. This is an uncharacterized protein from Bacillus cytotoxicus (strain DSM 22905 / CIP 110041 / 391-98 / NVH 391-98).